The sequence spans 354 residues: UDP-3-O-acylglucosamine N-acyltransferase (354 aa).

His-250 functions as the Proton acceptor in the catalytic mechanism.

Belongs to the transferase hexapeptide repeat family. LpxD subfamily. In terms of assembly, homotrimer.

The catalysed reaction is a UDP-3-O-[(3R)-3-hydroxyacyl]-alpha-D-glucosamine + a (3R)-hydroxyacyl-[ACP] = a UDP-2-N,3-O-bis[(3R)-3-hydroxyacyl]-alpha-D-glucosamine + holo-[ACP] + H(+). It participates in bacterial outer membrane biogenesis; LPS lipid A biosynthesis. Functionally, catalyzes the N-acylation of UDP-3-O-acylglucosamine using 3-hydroxyacyl-ACP as the acyl donor. Is involved in the biosynthesis of lipid A, a phosphorylated glycolipid that anchors the lipopolysaccharide to the outer membrane of the cell. The chain is UDP-3-O-acylglucosamine N-acyltransferase from Methylococcus capsulatus (strain ATCC 33009 / NCIMB 11132 / Bath).